The primary structure comprises 131 residues: GFLGGGYGGGLGLGGYGGGYGLGGGLGGGLGGIGLAAAPAVGIAAAPAIGIAAAPATLVRTRVVPGPARLVQPPPVVQKQVIQPPPIVQTRLIQPPAQLVQGPPQVIHEQTPALIKTAVPAPSFGYKSLLH.

Repeat copies occupy residues 37-40 (AAPA), 45-48 (AAPA), and 53-56 (AAPA).

Component of the cuticle of migratory locust which contains more than 100 different structural proteins. This Locusta migratoria (Migratory locust) protein is Cuticle protein 79, isoform A.